Here is a 158-residue protein sequence, read N- to C-terminus: uncharacterized protein (158 aa).

Helical transmembrane passes span isoleucine 12–valine 32, leucine 39–valine 59, leucine 90–isoleucine 110, and isoleucine 113–leucine 133.

The protein localises to the cell membrane. This is an uncharacterized protein from Mycoplasma genitalium (strain ATCC 33530 / DSM 19775 / NCTC 10195 / G37) (Mycoplasmoides genitalium).